A 127-amino-acid chain; its full sequence is Protein ApaG (127 aa).

An ApaG domain is found at 3 to 127 (NNPSSKIEVA…FVLSVPRTLH (125 aa)).

The sequence is that of Protein ApaG from Xylella fastidiosa (strain M23).